A 568-amino-acid chain; its full sequence is Urease subunit alpha (568 aa).

The region spanning 131–568 (GGMDAHIHFI…LPLAQRYFLY (438 aa)) is the Urease domain. Ni(2+) contacts are provided by H136, H138, and K219. K219 carries the N6-carboxylysine modification. A substrate-binding site is contributed by H221. Ni(2+) is bound by residues H248 and H274. Catalysis depends on H322, which acts as the Proton donor. D362 contacts Ni(2+).

The protein belongs to the metallo-dependent hydrolases superfamily. Urease alpha subunit family. Heterotrimer of UreA (gamma), UreB (beta) and UreC (alpha) subunits. Three heterotrimers associate to form the active enzyme. The cofactor is Ni cation. In terms of processing, carboxylation allows a single lysine to coordinate two nickel ions.

It is found in the cytoplasm. It catalyses the reaction urea + 2 H2O + H(+) = hydrogencarbonate + 2 NH4(+). It functions in the pathway nitrogen metabolism; urea degradation; CO(2) and NH(3) from urea (urease route): step 1/1. The polypeptide is Urease subunit alpha (Cereibacter sphaeroides (strain ATCC 17023 / DSM 158 / JCM 6121 / CCUG 31486 / LMG 2827 / NBRC 12203 / NCIMB 8253 / ATH 2.4.1.) (Rhodobacter sphaeroides)).